A 394-amino-acid polypeptide reads, in one-letter code: RAB6A-GEF complex partner protein 2 (394 aa).

Belongs to the RGP1 family. In terms of assembly, forms a complex with RIC1; the interaction enhances RAB6A GTPase activity. Interacts with RIC1. Interacts with RAB6A; the interaction is direct with a preference for RAB6A-GDP. Interacts with RAB33B.

The protein resides in the cytoplasm. It localises to the cytosol. It is found in the membrane. Its function is as follows. The RIC1-RGP1 complex acts as a guanine nucleotide exchange factor (GEF), which activates RAB6A by exchanging bound GDP for free GTP and may thereby required for efficient fusion of endosome-derived vesicles with the Golgi compartment. The RIC1-RGP1 complex participates in the recycling of mannose-6-phosphate receptors. This chain is RAB6A-GEF complex partner protein 2, found in Bos taurus (Bovine).